Reading from the N-terminus, the 26-residue chain is Oxyopinin-3a (26 aa).

In terms of tissue distribution, expressed by the venom gland.

It localises to the secreted. May have cytolytic and antimicrobial activity. The protein is Oxyopinin-3a of Oxyopes takobius (Lynx spider).